Reading from the N-terminus, the 98-residue chain is NADH-ubiquinone oxidoreductase chain 4L (98 aa).

3 helical membrane-spanning segments follow: residues 1 to 21, 29 to 49, and 61 to 81; these read MSLT…GLLL, SLLC…MVIL, and IILL…LVMV.

This sequence belongs to the complex I subunit 4L family. Core subunit of respiratory chain NADH dehydrogenase (Complex I) which is composed of 45 different subunits.

It is found in the mitochondrion inner membrane. It carries out the reaction a ubiquinone + NADH + 5 H(+)(in) = a ubiquinol + NAD(+) + 4 H(+)(out). In terms of biological role, core subunit of the mitochondrial membrane respiratory chain NADH dehydrogenase (Complex I) which catalyzes electron transfer from NADH through the respiratory chain, using ubiquinone as an electron acceptor. Part of the enzyme membrane arm which is embedded in the lipid bilayer and involved in proton translocation. In Platyrrhinus helleri (Heller's broad-nosed bat), this protein is NADH-ubiquinone oxidoreductase chain 4L (MT-ND4L).